The chain runs to 132 residues: MSDIDFGYTKDHARKGANAKLPEIQCWENQYKRDYDIRIELPEFTSVCPKTGLPDFGVITIDYIPDRLCLELKSLKYYLLEYRDMGIFMENIANKILDDVVKACKPKKAVVTGDFTPRGGLRSVIVAKYEKK.

The active-site Thioimide intermediate is C48. D55 functions as the Proton donor in the catalytic mechanism. Substrate contacts are provided by residues 70 to 72 (LEL) and 89 to 90 (ME).

The protein belongs to the GTP cyclohydrolase I family. QueF type 1 subfamily.

The protein resides in the cytoplasm. It carries out the reaction 7-aminomethyl-7-carbaguanine + 2 NADP(+) = 7-cyano-7-deazaguanine + 2 NADPH + 3 H(+). It functions in the pathway tRNA modification; tRNA-queuosine biosynthesis. Catalyzes the NADPH-dependent reduction of 7-cyano-7-deazaguanine (preQ0) to 7-aminomethyl-7-deazaguanine (preQ1). The polypeptide is NADPH-dependent 7-cyano-7-deazaguanine reductase (Elusimicrobium minutum (strain Pei191)).